The chain runs to 399 residues: Sex hormone-binding globulin (399 aa).

An N-terminal signal peptide occupies residues 1–29 (MENRDSVASLLLLLLLLPPPHTHQGQVLR). Laminin G-like domains follow at residues 43-214 (RYLS…LGNC) and 221-387 (GLFF…THSC). An N-linked (GlcNAc...) asparagine glycan is attached at Asn-160. A disulfide bridge connects residues Cys-191 and Cys-214. N-linked (GlcNAc...) asparagine glycans are attached at residues Asn-270, Asn-353, Asn-377, and Asn-393. A disulfide bond links Cys-359 and Cys-387.

In terms of assembly, homodimer. Post-translationally, differentially glycosylated in liver (SHBG) and testis (ABP).

It is found in the secreted. Functions as an androgen transport protein, but may also be involved in receptor mediated processes. Each dimer binds one molecule of steroid. Specific for 5-alpha-dihydrotestosterone, testosterone, and 17-beta-estradiol. Regulates the plasma metabolic clearance rate of steroid hormones by controlling their plasma concentration. This Phodopus sungorus (Striped hairy-footed hamster) protein is Sex hormone-binding globulin (SHBG).